The chain runs to 320 residues: Zinc transporter ZitB (320 aa).

A run of 6 helical transmembrane segments spans residues 16–36 (LLAA…GGLL), 43–63 (LADA…LVAV), 85–105 (AAFV…WEAI), 117–137 (VPML…FWLL), 153–173 (LHVL…IIIL), and 180–200 (IDPI…WALL).

Belongs to the cation diffusion facilitator (CDF) transporter (TC 2.A.4) family. SLC30A subfamily.

Its subcellular location is the cell inner membrane. Functionally, involved in zinc efflux across the cytoplasmic membrane, thus reducing zinc accumulation in the cytoplasm and rendering bacteria more resistant to zinc. It may contribute to zinc homeostasis at low concentrations of zinc. This chain is Zinc transporter ZitB, found in Pectobacterium atrosepticum (strain SCRI 1043 / ATCC BAA-672) (Erwinia carotovora subsp. atroseptica).